Here is a 527-residue protein sequence, read N- to C-terminus: Endogenous retrovirus group FC1 member 1 Env polyprotein (527 aa).

Residues 1-411 (MNSPCDRLQQ…EPRPQNKSKW (411 aa)) are surface protein. Positions 280–283 (CFLC) match the CXXC motif. Residues 412 to 432 (AIFLPLVLGISLASSLVASGL) are fusion peptide. The interval 412–527 (AIFLPLVLGI…LKKKKSSKRS (116 aa)) is transmembrane protein. The short motif at 477-493 (AQNRQALDLLMAEKGRT) is the CKS-17 element. An intrachain disulfide couples cysteine 494 to cysteine 501. Residues 494–502 (CLFLQEECC) carry the CX6CC motif.

It belongs to the gamma type-C retroviral envelope protein family. HERV class-I F(c)2 env subfamily. The CXXC motif is highly conserved across a broad range of retroviral envelope proteins. It is thought to participate in the formation of a labile disulfide bond possibly with the CX6CC motif present in the transmembrane domain. Low expression in skin and testis.

The protein resides in the virion. In terms of biological role, retroviral envelope proteins mediate receptor recognition and membrane fusion during early infection. Endogenous envelope proteins may have kept, lost or modified their original function during evolution. This endogenous envelope protein has lost its original fusogenic properties. This chain is Endogenous retrovirus group FC1 member 1 Env polyprotein (ERVFC1-1), found in Homo sapiens (Human).